Consider the following 378-residue polypeptide: Lipid-A-disaccharide synthase (378 aa).

This sequence belongs to the LpxB family.

The enzyme catalyses a lipid X + a UDP-2-N,3-O-bis[(3R)-3-hydroxyacyl]-alpha-D-glucosamine = a lipid A disaccharide + UDP + H(+). It participates in bacterial outer membrane biogenesis; LPS lipid A biosynthesis. Condensation of UDP-2,3-diacylglucosamine and 2,3-diacylglucosamine-1-phosphate to form lipid A disaccharide, a precursor of lipid A, a phosphorylated glycolipid that anchors the lipopolysaccharide to the outer membrane of the cell. This chain is Lipid-A-disaccharide synthase, found in Methylobacillus flagellatus (strain ATCC 51484 / DSM 6875 / VKM B-1610 / KT).